Consider the following 314-residue polypeptide: Transmembrane protein 178B (314 aa).

Residues 1 to 24 (MRLLAGAGLCLALAALALLAVALS) form the signal peptide. The interval 32–83 (DARRHRDRCRKPGGKRNDPGYMYTPGQHLPLRGEPPSSRIRSPRGGEPGGVR) is disordered. A compositionally biased stretch (basic residues) spans 36-45 (HRDRCRKPGG). The next 3 membrane-spanning stretches (helical) occupy residues 194-214 (AGFIGMAVSIILFGWMVGVLG), 228-248 (LLFLMGGTCCIISLCTCVAGI), and 274-294 (MFCAWGGLGLTLLSGFLCTLA).

This sequence belongs to the TMEM178 family.

Its subcellular location is the membrane. In Xenopus tropicalis (Western clawed frog), this protein is Transmembrane protein 178B (tmem178b).